The following is a 138-amino-acid chain: U1 small nuclear ribonucleoprotein C (138 aa).

A Matrin-type zinc finger spans residues 4 to 36 (FYCDYCDTYLTHDSPSVRKTHCSGRKHKENVRD). Residue Tyr8 is modified to Phosphotyrosine. The residue at position 17 (Ser17) is a Phosphoserine. Lys52 bears the N6-acetyllysine mark. Residues 62–99 (IPPNLFSAPPLGGPMIPPPHPSMMGPPPPGMMPVGPPP) form a disordered region. Residues 72-99 (LGGPMIPPPHPSMMGPPPPGMMPVGPPP) are compositionally biased toward pro residues.

The protein belongs to the U1 small nuclear ribonucleoprotein C family. Component of the U1 snRNP. The U1 snRNP is composed of the U1 snRNA and the 7 core Sm proteins SNRPB, SNRPD1, SNRPD2, SNRPD3, SNRPE, SNRPF and SNRPG that assemble in a heptameric protein ring on the Sm site of the small nuclear RNA to form the core snRNP, and at least 3 U1 snRNP-specific proteins SNRNP70/U1-70K, SNRPA/U1-A and SNRPC/U1-C. SNRPC/U1-C interacts with U1 snRNA and the 5' splice-site region of the pre-mRNA. Interacts (via N-terminus) with TIA1 (via C-terminus); thereby promoting spliceosomal U1 snRNP recruitment to 5' splice sites.

Its subcellular location is the nucleus. Functionally, component of the spliceosomal U1 snRNP, which is essential for recognition of the pre-mRNA 5' splice-site and the subsequent assembly of the spliceosome. SNRPC/U1-C is directly involved in initial 5' splice-site recognition for both constitutive and regulated alternative splicing. The interaction with the 5' splice-site seems to precede base-pairing between the pre-mRNA and the U1 snRNA. Stimulates commitment or early (E) complex formation by stabilizing the base pairing of the 5' end of the U1 snRNA and the 5' splice-site region. This Monodelphis domestica (Gray short-tailed opossum) protein is U1 small nuclear ribonucleoprotein C.